Consider the following 114-residue polypeptide: Seed trypsin/chymotrypsin inhibitor TI5-72 (114 aa).

Positions 1–28 are cleaved as a signal peptide; that stretch reads MELMNKKVMMKLALMVFLLSFAANVVNA. Positions 29 to 42 are excised as a propeptide; it reads RFDSTSFITQVLSN. Intrachain disulfides connect Cys-50–Cys-103, Cys-51–Cys-66, Cys-54–Cys-99, Cys-56–Cys-64, Cys-73–Cys-80, Cys-77–Cys-92, and Cys-82–Cys-90.

Belongs to the Bowman-Birk serine protease inhibitor family. In terms of tissue distribution, seed.

Functionally, inhibitor of trypsin and of chymotrypsin. May function as a natural phytochemical defense against predators. The sequence is that of Seed trypsin/chymotrypsin inhibitor TI5-72 (TI572) from Pisum sativum (Garden pea).